The primary structure comprises 54 residues: UPF0391 membrane protein R00741 (54 aa).

The next 2 helical transmembrane spans lie at 5-25 (ALVF…GIAG) and 30-50 (IAQV…VAGL).

It belongs to the UPF0391 family.

The protein localises to the cell membrane. The protein is UPF0391 membrane protein R00741 of Rhizobium meliloti (strain 1021) (Ensifer meliloti).